A 216-amino-acid polypeptide reads, in one-letter code: MRLILLGPPGAGKGTQAQRIVEKHGIPQLSTGDMLRAAVNAGTEVGKRAKAVMDAGKLVSDEIVIAIVSERIDQPDCANGFILDGFPRTLVQADATEAMLKAKGLDLSVVIEFRVDDEELVRRVDGRYTCAQCGTVYHDTDKVPVEEGVCDKCGSTHFKRRPDDNAETMIKRLEVYYKETSPLIGYYHAKGKLRPVDGMAEIDQVTAEVEAILSKL.

Position 10-15 (10-15 (GAGKGT)) interacts with ATP. An NMP region spans residues 30-59 (STGDMLRAAVNAGTEVGKRAKAVMDAGKLV). AMP-binding positions include threonine 31, arginine 36, 57–59 (KLV), 85–88 (GFPR), and glutamine 92. Positions 126 to 163 (GRYTCAQCGTVYHDTDKVPVEEGVCDKCGSTHFKRRPD) are LID. Arginine 127 provides a ligand contact to ATP. Zn(2+) is bound by residues cysteine 130 and cysteine 133. An ATP-binding site is contributed by 136 to 137 (VY). The Zn(2+) site is built by cysteine 150 and cysteine 153. The AMP site is built by arginine 160 and arginine 172. Alanine 200 lines the ATP pocket.

The protein belongs to the adenylate kinase family. Monomer.

It localises to the cytoplasm. It carries out the reaction AMP + ATP = 2 ADP. Its pathway is purine metabolism; AMP biosynthesis via salvage pathway; AMP from ADP: step 1/1. In terms of biological role, catalyzes the reversible transfer of the terminal phosphate group between ATP and AMP. Plays an important role in cellular energy homeostasis and in adenine nucleotide metabolism. This is Adenylate kinase from Rhizobium etli (strain ATCC 51251 / DSM 11541 / JCM 21823 / NBRC 15573 / CFN 42).